The primary structure comprises 249 residues: Tryptophan synthase alpha chain (249 aa).

Catalysis depends on proton acceptor residues Glu-43 and Asp-54.

This sequence belongs to the TrpA family. In terms of assembly, tetramer of two alpha and two beta chains.

It catalyses the reaction (1S,2R)-1-C-(indol-3-yl)glycerol 3-phosphate + L-serine = D-glyceraldehyde 3-phosphate + L-tryptophan + H2O. The protein operates within amino-acid biosynthesis; L-tryptophan biosynthesis; L-tryptophan from chorismate: step 5/5. The alpha subunit is responsible for the aldol cleavage of indoleglycerol phosphate to indole and glyceraldehyde 3-phosphate. The polypeptide is Tryptophan synthase alpha chain (Campylobacter jejuni subsp. jejuni serotype O:23/36 (strain 81-176)).